A 329-amino-acid chain; its full sequence is MQGSVTEFLKPRLVDIEQVNSTRAKVTLEPLERGFGHTLGNALRRILLSSMPGCAVTEVEIDGVLHEYSSKEGVQEDILEILLNLKGLAVTIEGKDEAMLTLSKSGAGPVIAADITHDGDVTIVNPDHVICHLTGNNDISMRIRVERGRGYVPASARAQTEDDDRPIGRLLVDASFSPVARIAYNVEAARVEQRTDLDKLVIDMTTNGTIDPEEAIRRSATILAEQLDAFVELRDVTEPELKEEKPEFDPILLRPVDDLELTVRSANCLKAEAIHYIGDLVQRTEVELLKTPNLGKKSLTEIKDVLASRGLSLGMRLENWPPASLADDL.

Residues 1-234 (MQGSVTEFLK…EQLDAFVELR (234 aa)) form an alpha N-terminal domain (alpha-NTD) region. Residues 248-329 (FDPILLRPVD…WPPASLADDL (82 aa)) are alpha C-terminal domain (alpha-CTD).

This sequence belongs to the RNA polymerase alpha chain family. In terms of assembly, homodimer. The RNAP catalytic core consists of 2 alpha, 1 beta, 1 beta' and 1 omega subunit. When a sigma factor is associated with the core the holoenzyme is formed, which can initiate transcription.

The catalysed reaction is RNA(n) + a ribonucleoside 5'-triphosphate = RNA(n+1) + diphosphate. In terms of biological role, DNA-dependent RNA polymerase catalyzes the transcription of DNA into RNA using the four ribonucleoside triphosphates as substrates. This chain is DNA-directed RNA polymerase subunit alpha, found in Shewanella putrefaciens (strain CN-32 / ATCC BAA-453).